Consider the following 313-residue polypeptide: L-lactate dehydrogenase 1 (313 aa).

Val15, Asp36, Arg41, and Tyr66 together coordinate NAD(+). Residues Gln83, Arg89, and 121-124 (NPVD) contribute to the substrate site. Residues 119–121 (ASN) and Ser144 each bind NAD(+). 149-152 (DTAR) contacts substrate. 2 residues coordinate beta-D-fructose 1,6-bisphosphate: Arg154 and His169. The Proton acceptor role is filled by His176. Tyr218 is subject to Phosphotyrosine. Residue Thr227 coordinates substrate.

Belongs to the LDH/MDH superfamily. LDH family. In terms of assembly, homotetramer.

The protein localises to the cytoplasm. It catalyses the reaction (S)-lactate + NAD(+) = pyruvate + NADH + H(+). It functions in the pathway fermentation; pyruvate fermentation to lactate; (S)-lactate from pyruvate: step 1/1. Allosterically activated by fructose 1,6-bisphosphate (FBP). Functionally, catalyzes the conversion of lactate to pyruvate. The polypeptide is L-lactate dehydrogenase 1 (Listeria monocytogenes serotype 4b (strain F2365)).